The following is a 493-amino-acid chain: Proline--tRNA ligase (493 aa).

The protein belongs to the class-II aminoacyl-tRNA synthetase family. ProS type 3 subfamily. Homodimer.

Its subcellular location is the cytoplasm. The enzyme catalyses tRNA(Pro) + L-proline + ATP = L-prolyl-tRNA(Pro) + AMP + diphosphate. Catalyzes the attachment of proline to tRNA(Pro) in a two-step reaction: proline is first activated by ATP to form Pro-AMP and then transferred to the acceptor end of tRNA(Pro). In Porphyromonas gingivalis (strain ATCC 33277 / DSM 20709 / CIP 103683 / JCM 12257 / NCTC 11834 / 2561), this protein is Proline--tRNA ligase.